We begin with the raw amino-acid sequence, 131 residues long: Holo-[acyl-carrier-protein] synthase (131 aa).

Mg(2+)-binding residues include Asp-8 and Glu-63.

The protein belongs to the P-Pant transferase superfamily. AcpS family. Requires Mg(2+) as cofactor.

The protein resides in the cytoplasm. The enzyme catalyses apo-[ACP] + CoA = holo-[ACP] + adenosine 3',5'-bisphosphate + H(+). Its function is as follows. Transfers the 4'-phosphopantetheine moiety from coenzyme A to a Ser of acyl-carrier-protein. The chain is Holo-[acyl-carrier-protein] synthase from Shewanella halifaxensis (strain HAW-EB4).